Consider the following 72-residue polypeptide: Protein CYSTEINE-RICH TRANSMEMBRANE MODULE 9 (72 aa).

Residues 1 to 22 (MNPSEQNHLSVEKPSQTSSGPY) show a composition bias toward polar residues. The tract at residues 1 to 46 (MNPSEQNHLSVEKPSQTSSGPYTSPPPIGYPTRDAMVGDPPAAAVE) is disordered. A helical transmembrane segment spans residues 49 to 65 (SKGDGFWKGCCAAICCC).

It belongs to the CYSTM1 family. Heterodimers. Interacts with WIH1/CYSTM13. In terms of tissue distribution, mostly expressed in roots and flowers and, to a lower extent, in stems, siliques and leaves.

The protein resides in the cell membrane. It localises to the nucleus. Its function is as follows. Involved in resistance to abiotic stress. The polypeptide is Protein CYSTEINE-RICH TRANSMEMBRANE MODULE 9 (Arabidopsis thaliana (Mouse-ear cress)).